Reading from the N-terminus, the 914-residue chain is Isoleucine--tRNA ligase (914 aa).

A 'HIGH' region motif is present at residues 57-67 (PYANGQIHMGH). L-isoleucyl-5'-AMP is bound at residue glutamate 554. Residues 595-599 (KMSKS) carry the 'KMSKS' region motif. Lysine 598 contributes to the ATP binding site. Residues cysteine 883, cysteine 886, cysteine 904, and cysteine 907 each contribute to the Zn(2+) site.

Belongs to the class-I aminoacyl-tRNA synthetase family. IleS type 1 subfamily. Monomer. It depends on Zn(2+) as a cofactor.

Its subcellular location is the cytoplasm. It catalyses the reaction tRNA(Ile) + L-isoleucine + ATP = L-isoleucyl-tRNA(Ile) + AMP + diphosphate. Catalyzes the attachment of isoleucine to tRNA(Ile). As IleRS can inadvertently accommodate and process structurally similar amino acids such as valine, to avoid such errors it has two additional distinct tRNA(Ile)-dependent editing activities. One activity is designated as 'pretransfer' editing and involves the hydrolysis of activated Val-AMP. The other activity is designated 'posttransfer' editing and involves deacylation of mischarged Val-tRNA(Ile). The polypeptide is Isoleucine--tRNA ligase (Macrococcus caseolyticus (strain JCSC5402) (Macrococcoides caseolyticum)).